The chain runs to 494 residues: MERWWFNSMLFKKEFECRCGLNKSTESLGSIENASEGDEPDIKDRTKNIQSWGGRDDSSYSKVDHLFVVKDIRNFISDDTFLVKDSNGDNFSIYFDIENQIFEIDNNHSFRSELKNTYWNSSYLNNGSTSEDTYYNHYMYDTQYSWNNHINSCIDSYLQSQIWIETSIVSGGDNYSDSYIYSSICGESRNNSEGEVSDIQTHVKGSDFTIIESSNDLDVTQKYRHLWVQCENCYGLNYKKFLKSKMNICEQCGYHLKMNSSERIELSIDPGTWDPMDEDMASLDPIEFHSEEEPYKDRIDSYQKKTGLTEAVQTGIGQLNGIPVAVGVMDFQFMGGSMGSVVGEKITRLIEYATKELLPLIIVCASGGARMQEGSLSLMQMAKISSALYDYQSNKKLFYVSILTSPTTGGVTASFGMLGDIIIAEPNAYIAFAGKRVIEQTLNTTVPEGSQAAEYLFQKGLFDLIVPRNLLKSVLSELFKFHAFVPLNQNETEH.

Positions 226–494 constitute a CoA carboxyltransferase N-terminal domain; that stretch reads LWVQCENCYG…VPLNQNETEH (269 aa). Zn(2+) contacts are provided by C230, C233, C249, and C252. The C4-type zinc finger occupies 230–252; the sequence is CENCYGLNYKKFLKSKMNICEQC.

It belongs to the AccD/PCCB family. In terms of assembly, acetyl-CoA carboxylase is a heterohexamer composed of biotin carboxyl carrier protein, biotin carboxylase and 2 subunits each of ACCase subunit alpha and ACCase plastid-coded subunit beta (accD). Zn(2+) is required as a cofactor.

Its subcellular location is the plastid. The protein resides in the chloroplast stroma. The catalysed reaction is N(6)-carboxybiotinyl-L-lysyl-[protein] + acetyl-CoA = N(6)-biotinyl-L-lysyl-[protein] + malonyl-CoA. The protein operates within lipid metabolism; malonyl-CoA biosynthesis; malonyl-CoA from acetyl-CoA: step 1/1. Its function is as follows. Component of the acetyl coenzyme A carboxylase (ACC) complex. Biotin carboxylase (BC) catalyzes the carboxylation of biotin on its carrier protein (BCCP) and then the CO(2) group is transferred by the transcarboxylase to acetyl-CoA to form malonyl-CoA. The sequence is that of Acetyl-coenzyme A carboxylase carboxyl transferase subunit beta, chloroplastic from Coffea arabica (Arabian coffee).